Consider the following 122-residue polypeptide: Ribosome-binding factor A (122 aa).

The protein belongs to the RbfA family. Monomer. Binds 30S ribosomal subunits, but not 50S ribosomal subunits or 70S ribosomes.

The protein localises to the cytoplasm. Functionally, one of several proteins that assist in the late maturation steps of the functional core of the 30S ribosomal subunit. Associates with free 30S ribosomal subunits (but not with 30S subunits that are part of 70S ribosomes or polysomes). Required for efficient processing of 16S rRNA. May interact with the 5'-terminal helix region of 16S rRNA. This Prosthecochloris aestuarii (strain DSM 271 / SK 413) protein is Ribosome-binding factor A.